The sequence spans 228 residues: uncharacterized protein (228 aa).

S-adenosyl-L-methionine is bound by residues 77–79 (TTA), Gly-113, Val-133, and 140–142 (PSL).

This sequence belongs to the class IV-like SAM-binding methyltransferase superfamily. RNA methyltransferase TrmH family.

This is an uncharacterized protein from Escherichia coli (strain K12).